Consider the following 1064-residue polypeptide: Carbamoyl phosphate synthase large chain (1064 aa).

Residues Met1–Glu401 form a carboxyphosphate synthetic domain region. The ATP site is built by Arg129, Arg169, Gly175, Gly176, Glu208, Ile210, Glu215, Gly241, Val242, His243, Gln284, and Glu298. One can recognise an ATP-grasp 1 domain in the interval Lys133 to Ile327. Mg(2+)-binding residues include Gln284, Glu298, and Asn300. The Mn(2+) site is built by Gln284, Glu298, and Asn300. An oligomerization domain region spans residues Ile402 to Ser546. Residues Lys547–Lys929 are carbamoyl phosphate synthetic domain. The ATP-grasp 2 domain occupies Glu671–Leu861. ATP contacts are provided by Arg707, Ser746, Leu748, Glu752, Gly777, Val778, His779, Ser780, Gln820, and Glu832. Mg(2+)-binding residues include Gln820, Glu832, and Asn834. Mn(2+)-binding residues include Gln820, Glu832, and Asn834. An MGS-like domain is found at Leu930 to Ile1064. The allosteric domain stretch occupies residues Leu930–Ile1064.

Belongs to the CarB family. As to quaternary structure, composed of two chains; the small (or glutamine) chain promotes the hydrolysis of glutamine to ammonia, which is used by the large (or ammonia) chain to synthesize carbamoyl phosphate. Tetramer of heterodimers (alpha,beta)4. Requires Mg(2+) as cofactor. It depends on Mn(2+) as a cofactor.

The catalysed reaction is hydrogencarbonate + L-glutamine + 2 ATP + H2O = carbamoyl phosphate + L-glutamate + 2 ADP + phosphate + 2 H(+). It carries out the reaction hydrogencarbonate + NH4(+) + 2 ATP = carbamoyl phosphate + 2 ADP + phosphate + 2 H(+). The protein operates within amino-acid biosynthesis; L-arginine biosynthesis; carbamoyl phosphate from bicarbonate: step 1/1. It participates in pyrimidine metabolism; UMP biosynthesis via de novo pathway; (S)-dihydroorotate from bicarbonate: step 1/3. Its function is as follows. Large subunit of the glutamine-dependent carbamoyl phosphate synthetase (CPSase). CPSase catalyzes the formation of carbamoyl phosphate from the ammonia moiety of glutamine, carbonate, and phosphate donated by ATP, constituting the first step of 2 biosynthetic pathways, one leading to arginine and/or urea and the other to pyrimidine nucleotides. The large subunit (synthetase) binds the substrates ammonia (free or transferred from glutamine from the small subunit), hydrogencarbonate and ATP and carries out an ATP-coupled ligase reaction, activating hydrogencarbonate by forming carboxy phosphate which reacts with ammonia to form carbamoyl phosphate. This Lactococcus lactis subsp. cremoris (strain SK11) protein is Carbamoyl phosphate synthase large chain.